A 428-amino-acid polypeptide reads, in one-letter code: MTAIIDIHAREILDSRGNPTVEVDVLLEDGSFGRAAVPSGASTGAHEAVELRDGDKARYLGKGVTKAVTAVNSDIAECILGLDAEDQRDIDLAMIELDGTENKSRLGANAILGTSLAVAKAAADARGLPLYSYVGGVSAHVLPVPMMNIINGGEHADNPIDFQEFMIMPVGAPSLAEAVRWGAEVFHTLKKGLHEKGLATAVGDEGGFAPNLASTRDALDFVMASIEKAGFKPGEDMMLALDCAATEFFKNGKYEISGEGLSLSPDAMADYLAALCDAYPIISIEDGMGEDDFEGWAALTAKVGKRVQLVGDDLFVTNPKRLEMGIGKGLANSLLVKVNQIGSLTETLEAVSIAQRNGYTAVMSHRSGETEDATIADLAVATNCGQIKTGSLARSDRLAKYNQLIRIEEELGVSARYAGKTAFGRLGA.

Glutamine 163 serves as a coordination point for (2R)-2-phosphoglycerate. Catalysis depends on glutamate 205, which acts as the Proton donor. The Mg(2+) site is built by aspartate 242, glutamate 285, and aspartate 312. (2R)-2-phosphoglycerate contacts are provided by lysine 337, arginine 366, serine 367, and lysine 388. Catalysis depends on lysine 337, which acts as the Proton acceptor.

This sequence belongs to the enolase family. Mg(2+) is required as a cofactor.

Its subcellular location is the cytoplasm. It localises to the secreted. The protein localises to the cell surface. It carries out the reaction (2R)-2-phosphoglycerate = phosphoenolpyruvate + H2O. Its pathway is carbohydrate degradation; glycolysis; pyruvate from D-glyceraldehyde 3-phosphate: step 4/5. Functionally, catalyzes the reversible conversion of 2-phosphoglycerate (2-PG) into phosphoenolpyruvate (PEP). It is essential for the degradation of carbohydrates via glycolysis. The sequence is that of Enolase from Novosphingobium aromaticivorans (strain ATCC 700278 / DSM 12444 / CCUG 56034 / CIP 105152 / NBRC 16084 / F199).